A 420-amino-acid polypeptide reads, in one-letter code: Glutamate-1-semialdehyde 2,1-aminomutase (420 aa).

Lysine 261 carries the N6-(pyridoxal phosphate)lysine modification.

It belongs to the class-III pyridoxal-phosphate-dependent aminotransferase family. HemL subfamily. It depends on pyridoxal 5'-phosphate as a cofactor.

It is found in the cytoplasm. The enzyme catalyses (S)-4-amino-5-oxopentanoate = 5-aminolevulinate. The protein operates within porphyrin-containing compound metabolism; protoporphyrin-IX biosynthesis; 5-aminolevulinate from L-glutamyl-tRNA(Glu): step 2/2. The sequence is that of Glutamate-1-semialdehyde 2,1-aminomutase from Thermoplasma volcanium (strain ATCC 51530 / DSM 4299 / JCM 9571 / NBRC 15438 / GSS1).